A 299-amino-acid chain; its full sequence is Acetylglutamate kinase (299 aa).

Substrate is bound by residues 72-73, R94, and N196; that span reads GG.

The protein belongs to the acetylglutamate kinase family. ArgB subfamily.

Its subcellular location is the cytoplasm. It catalyses the reaction N-acetyl-L-glutamate + ATP = N-acetyl-L-glutamyl 5-phosphate + ADP. It participates in amino-acid biosynthesis; L-arginine biosynthesis; N(2)-acetyl-L-ornithine from L-glutamate: step 2/4. Functionally, catalyzes the ATP-dependent phosphorylation of N-acetyl-L-glutamate. The polypeptide is Acetylglutamate kinase (Paraburkholderia phymatum (strain DSM 17167 / CIP 108236 / LMG 21445 / STM815) (Burkholderia phymatum)).